Consider the following 356-residue polypeptide: sn-glycerol-3-phosphate import ATP-binding protein UgpC (356 aa).

Residues 4 to 235 (LKLQAVTKSW…PASLFVASFI (232 aa)) enclose the ABC transporter domain. 37–44 (GPSGCGKS) is a binding site for ATP.

It belongs to the ABC transporter superfamily. sn-glycerol-3-phosphate importer (TC 3.A.1.1.3) family. As to quaternary structure, the complex is composed of two ATP-binding proteins (UgpC), two transmembrane proteins (UgpA and UgpE) and a solute-binding protein (UgpB).

The protein localises to the cell inner membrane. The enzyme catalyses sn-glycerol 3-phosphate(out) + ATP + H2O = sn-glycerol 3-phosphate(in) + ADP + phosphate + H(+). Functionally, part of the ABC transporter complex UgpBAEC involved in sn-glycerol-3-phosphate (G3P) import. Responsible for energy coupling to the transport system. This is sn-glycerol-3-phosphate import ATP-binding protein UgpC from Escherichia coli O6:H1 (strain CFT073 / ATCC 700928 / UPEC).